The following is a 205-amino-acid chain: uncharacterized protein (205 aa).

The next 4 membrane-spanning stretches (helical) occupy residues 18–38 (ATVN…GTIG), 69–89 (LGIF…CFYA), 106–126 (VVWI…YYIM), and 127–147 (LLHP…LFLI).

Its subcellular location is the mitochondrion membrane. This is an uncharacterized protein from Arabidopsis thaliana (Mouse-ear cress).